We begin with the raw amino-acid sequence, 511 residues long: UPF0288 protein MK0796 (511 aa).

Belongs to the UPF0288 family.

The sequence is that of UPF0288 protein MK0796 from Methanopyrus kandleri (strain AV19 / DSM 6324 / JCM 9639 / NBRC 100938).